Here is a 522-residue protein sequence, read N- to C-terminus: Glutamate--cysteine ligase (522 aa).

This sequence belongs to the glutamate--cysteine ligase type 1 family. Type 1 subfamily.

It catalyses the reaction L-cysteine + L-glutamate + ATP = gamma-L-glutamyl-L-cysteine + ADP + phosphate + H(+). It functions in the pathway sulfur metabolism; glutathione biosynthesis; glutathione from L-cysteine and L-glutamate: step 1/2. The polypeptide is Glutamate--cysteine ligase (Shewanella pealeana (strain ATCC 700345 / ANG-SQ1)).